The chain runs to 152 residues: 6,7-dimethyl-8-ribityllumazine synthase (152 aa).

5-amino-6-(D-ribitylamino)uracil-binding positions include Phe-18, 49-51 (ALE), and 75-77 (CVI). Residue 80–81 (ET) coordinates (2S)-2-hydroxy-3-oxobutyl phosphate. The Proton donor role is filled by His-83. Residue Asn-108 participates in 5-amino-6-(D-ribitylamino)uracil binding. Residue Arg-122 coordinates (2S)-2-hydroxy-3-oxobutyl phosphate.

It belongs to the DMRL synthase family.

It carries out the reaction (2S)-2-hydroxy-3-oxobutyl phosphate + 5-amino-6-(D-ribitylamino)uracil = 6,7-dimethyl-8-(1-D-ribityl)lumazine + phosphate + 2 H2O + H(+). It participates in cofactor biosynthesis; riboflavin biosynthesis; riboflavin from 2-hydroxy-3-oxobutyl phosphate and 5-amino-6-(D-ribitylamino)uracil: step 1/2. Functionally, catalyzes the formation of 6,7-dimethyl-8-ribityllumazine by condensation of 5-amino-6-(D-ribitylamino)uracil with 3,4-dihydroxy-2-butanone 4-phosphate. This is the penultimate step in the biosynthesis of riboflavin. The protein is 6,7-dimethyl-8-ribityllumazine synthase of Bartonella bacilliformis (strain ATCC 35685 / KC583 / Herrer 020/F12,63).